We begin with the raw amino-acid sequence, 226 residues long: CD9 antigen (226 aa).

Topologically, residues 1–12 (MPVKGGTKCIKY) are cytoplasmic. Cys9 is lipidated: S-palmitoyl cysteine. A helical membrane pass occupies residues 13-33 (LLFGFNFIFWLAGIAVLAVGL). Topologically, residues 34 to 53 (WLRFDSQTKSIFEQDSQPSS) are extracellular. A helical transmembrane segment spans residues 54 to 74 (FYTGVYILIGAGALMMLVGFL). Over 75–85 (GCCGAVQESQC) the chain is Cytoplasmic. S-palmitoyl cysteine attachment occurs at residues Cys76, Cys77, and Cys85. Residues 86-109 (MLGLFFGFLLVIFAIEIAAAIWGY) traverse the membrane as a helical segment. The Extracellular portion of the chain corresponds to 110–193 (SHKDEVIQEV…KEVFHNKFHI (84 aa)). Cystine bridges form between Cys150–Cys179 and Cys151–Cys165. Residues 194 to 219 (IGAVGIGIAVVMIFGMIFSMILCCAI) traverse the membrane as a helical segment. Residues Cys216 and Cys217 are each lipidated (S-palmitoyl cysteine). The Cytoplasmic segment spans residues 220-226 (RRSREMV).

The protein belongs to the tetraspanin (TM4SF) family. As to quaternary structure, forms both disulfide-linked homodimers and higher homooligomers as well as heterooligomers with other members of the tetraspanin family. Interacts (via the second extracellular domain) with integrin ITGAV:ITGB3. Interacts with integrin ITGA6:ITGB1; interaction takes place in oocytes and is involved in sperm-egg fusion. Part of integrin-tetraspanin complexes composed of CD81, beta-1 and beta-2 integrins in the membrane of monocyte/macrophages. Interacts with CD63; identified in a complex with CD63 and ITGB3. Associates with CR2/CD21 and with PTGFRN/CD9P1. Part of a complex composed of CD9, CD81, PTGFRN and IGSF8. Interacts directly with IGSF8. Interacts with PDPN; this interaction is homophilic and attenuates platelet aggregation and pulmonary metastasis induced by PDPN. Interacts (on T cell side) with CD81 at immunological synapses between antigen-presenting cells and T cells. Palmitoylated at a low, basal level in unstimulated platelets. The level of palmitoylation increases when platelets are activated by thrombin (in vitro). The protein exists in three forms with molecular masses between 22 and 27 kDa, and is known to carry covalently linked fatty acids. Palmitoylation by ZDHHC2 regulates CD9 expression, association with other tetraspanin family proteins and function in cell adhesion.

Its subcellular location is the cell membrane. The protein resides in the membrane. It is found in the secreted. The protein localises to the extracellular exosome. Its function is as follows. Integral membrane protein associated with integrins, which regulates different processes, such as sperm-egg fusion, platelet activation and aggregation, and cell adhesion. Present at the cell surface of oocytes and plays a key role in sperm-egg fusion, possibly by organizing multiprotein complexes and the morphology of the membrane required for the fusion. In myoblasts, associates with CD81 and PTGFRN and inhibits myotube fusion during muscle regeneration. In macrophages, associates with CD81 and beta-1 and beta-2 integrins, and prevents macrophage fusion into multinucleated giant cells specialized in ingesting complement-opsonized large particles. Also prevents the fusion between mononuclear cell progenitors into osteoclasts in charge of bone resorption. Acts as a receptor for PSG17. Involved in platelet activation and aggregation. Regulates paranodal junction formation. Involved in cell adhesion, cell motility and tumor metastasis. The protein is CD9 antigen of Felis catus (Cat).